Here is a 128-residue protein sequence, read N- to C-terminus: Large ribosomal subunit protein bL20c (128 aa).

The protein belongs to the bacterial ribosomal protein bL20 family.

The protein localises to the plastid. It localises to the chloroplast. In terms of biological role, binds directly to 23S ribosomal RNA and is necessary for the in vitro assembly process of the 50S ribosomal subunit. It is not involved in the protein synthesizing functions of that subunit. This chain is Large ribosomal subunit protein bL20c, found in Daucus carota (Wild carrot).